The chain runs to 325 residues: Golgi to ER traffic protein 4 homolog A (325 aa).

Disordered regions lie at residues 1-22 (MAAA…GGVQ) and 306-325 (SGED…IELD). Residues 307 to 317 (GEDDDVEDGQE) show a composition bias toward acidic residues.

It belongs to the GET4 family. Component of the bag6/bat3 complex.

The protein localises to the cytoplasm. Its subcellular location is the cytosol. Functionally, as part of a cytosolic protein quality control complex, the bag6/bat3 complex, maintains misfolded and hydrophobic patches-containing proteins in a soluble state and participates in their proper delivery to the endoplasmic reticulum or alternatively can promote their sorting to the proteasome where they undergo degradation. The bag6/bat3 complex is involved in the post-translational delivery of tail-anchored/type II transmembrane proteins to the endoplasmic reticulum membrane. Similarly, the bag6/bat3 complex also functions as a sorting platform for proteins of the secretory pathway that are mislocalized to the cytosol either delivering them to the proteasome for degradation or to the endoplasmic reticulum. The bag6/bat3 complex also plays a role in the endoplasmic reticulum-associated degradation (ERAD), a quality control mechanism that eliminates unwanted proteins of the endoplasmic reticulum through their retrotranslocation to the cytosol and their targeting to the proteasome. It maintains these retrotranslocated proteins in an unfolded yet soluble state condition in the cytosol to ensure their proper delivery to the proteasome. This chain is Golgi to ER traffic protein 4 homolog A (get4-a), found in Xenopus laevis (African clawed frog).